A 279-amino-acid polypeptide reads, in one-letter code: 4-diphosphocytidyl-2-C-methyl-D-erythritol kinase (279 aa).

The active site involves Lys9. 92–102 contributes to the ATP binding site; that stretch reads PLAAGLGGGSS. Asp134 is a catalytic residue.

It belongs to the GHMP kinase family. IspE subfamily.

The catalysed reaction is 4-CDP-2-C-methyl-D-erythritol + ATP = 4-CDP-2-C-methyl-D-erythritol 2-phosphate + ADP + H(+). It functions in the pathway isoprenoid biosynthesis; isopentenyl diphosphate biosynthesis via DXP pathway; isopentenyl diphosphate from 1-deoxy-D-xylulose 5-phosphate: step 3/6. Functionally, catalyzes the phosphorylation of the position 2 hydroxy group of 4-diphosphocytidyl-2C-methyl-D-erythritol. This is 4-diphosphocytidyl-2-C-methyl-D-erythritol kinase from Syntrophus aciditrophicus (strain SB).